The primary structure comprises 401 residues: Argininosuccinate synthase (401 aa).

9-17 provides a ligand contact to ATP; that stretch reads AYSGGLDTS. Tyr86 is a binding site for L-citrulline. Residue Gly116 participates in ATP binding. 3 residues coordinate L-aspartate: Thr118, Asn122, and Asp123. Asn122 contributes to the L-citrulline binding site. Arg126, Ser174, Ser183, Glu259, and Tyr271 together coordinate L-citrulline.

Belongs to the argininosuccinate synthase family. Type 1 subfamily. Homotetramer.

Its subcellular location is the cytoplasm. The catalysed reaction is L-citrulline + L-aspartate + ATP = 2-(N(omega)-L-arginino)succinate + AMP + diphosphate + H(+). It functions in the pathway amino-acid biosynthesis; L-arginine biosynthesis; L-arginine from L-ornithine and carbamoyl phosphate: step 2/3. The polypeptide is Argininosuccinate synthase (Bacillus anthracis (strain A0248)).